Consider the following 184-residue polypeptide: Gastrokine-2 (184 aa).

The signal sequence occupies residues 1–20 (MKPLVAFLVVLSIFGIQSQA). Positions 54–151 (HSGSCSSTTI…LCKHMPLYEG (98 aa)) constitute a BRICHOS domain. A disulfide bridge links cysteine 81 with cysteine 143.

Heterodimer with TFF1; disulfide linked. Interacts with TFF2. Stomach foveolar epithelium and duodenal Brunner's glands.

It localises to the secreted. It is found in the golgi apparatus. In Mus musculus (Mouse), this protein is Gastrokine-2 (Gkn2).